The primary structure comprises 80 residues: Exodeoxyribonuclease 7 small subunit (80 aa).

This sequence belongs to the XseB family. As to quaternary structure, heterooligomer composed of large and small subunits.

It is found in the cytoplasm. The enzyme catalyses Exonucleolytic cleavage in either 5'- to 3'- or 3'- to 5'-direction to yield nucleoside 5'-phosphates.. Bidirectionally degrades single-stranded DNA into large acid-insoluble oligonucleotides, which are then degraded further into small acid-soluble oligonucleotides. This Pseudomonas putida (strain ATCC 700007 / DSM 6899 / JCM 31910 / BCRC 17059 / LMG 24140 / F1) protein is Exodeoxyribonuclease 7 small subunit.